The sequence spans 274 residues: Large ribosomal subunit protein uL2 (274 aa).

Disordered regions lie at residues 28-53 (KPYA…TVRH) and 223-274 (VAMN…RRTK). A compositionally biased stretch (low complexity) spans 39-48 (KSGGRNNNGR). The span at 254–274 (KGAKTRKNKRTDKFIVRRRTK) shows a compositional bias: basic residues.

This sequence belongs to the universal ribosomal protein uL2 family. Part of the 50S ribosomal subunit. Forms a bridge to the 30S subunit in the 70S ribosome.

Its function is as follows. One of the primary rRNA binding proteins. Required for association of the 30S and 50S subunits to form the 70S ribosome, for tRNA binding and peptide bond formation. It has been suggested to have peptidyltransferase activity; this is somewhat controversial. Makes several contacts with the 16S rRNA in the 70S ribosome. This Pseudoalteromonas translucida (strain TAC 125) protein is Large ribosomal subunit protein uL2.